The chain runs to 387 residues: Limonene 1,2-monooxygenase (387 aa).

Belongs to the bacterial luciferase oxidoreductase family. Requires FAD as cofactor.

It catalyses the reaction (4S)-limonene + NADPH + O2 + H(+) = limonene 1,2-epoxide + NADP(+) + H2O. The enzyme catalyses (4S)-limonene + NADH + O2 + H(+) = limonene 1,2-epoxide + NAD(+) + H2O. The catalysed reaction is (4R)-limonene + NADH + O2 + H(+) = limonene 1,2-epoxide + NAD(+) + H2O. It carries out the reaction (4R)-limonene + NADPH + O2 + H(+) = limonene 1,2-epoxide + NADP(+) + H2O. It participates in terpene metabolism; (4R)-limonene degradation; (1S,4R)-1-hydroxylimonen-2-one from (4R)-limonene: step 1/3. In terms of biological role, acts on both enantiomers of limonene by their NAD-dependent epoxidation at the 1,2 double bond forming limonene-1,2-epoxide. The protein is Limonene 1,2-monooxygenase (limB) of Rhodococcus erythropolis (Arthrobacter picolinophilus).